We begin with the raw amino-acid sequence, 305 residues long: MKRPDLSVEIAGIKLRNPVMTASGTFGYGEEFAAYVNLEKIGAIITKGLSLKPKAGNPTPRIQETTGGMLNAIGLQNVGIDAFIEKKVPFLRTVNTPAIVNFFGNTVEEYAELAERLDKIPEVAGMEINISCPNVKHGGIVFGTEPKAAYSVVKAVREATIKPVIVKLSPNVTDIVEMAWACADAEADALSLINTLTGMAIDLKSRRPILANVTGGLSGPAVKPVALRMVWQVAKAVKIPVIGIGGIMSGTDALEFMLAGATAVQVGTANFLDPAASERIAAEMEQYLVNNGITDVKELIGALQV.

FMN is bound by residues Ser-23 and 47–48 (KG). Substrate is bound by residues Lys-47 and 71–75 (NAIGL). FMN-binding residues include Asn-101 and Asn-129. Residue Asn-129 coordinates substrate. Residue Cys-132 is the Nucleophile of the active site. Residues Lys-167 and Ile-193 each contribute to the FMN site. Residue 194–195 (NT) coordinates substrate. Residues Gly-219, 245–246 (GG), and 267–268 (GT) each bind FMN.

This sequence belongs to the dihydroorotate dehydrogenase family. Type 1 subfamily. As to quaternary structure, heterotetramer of 2 PyrK and 2 PyrD type B subunits. Requires FMN as cofactor.

Its subcellular location is the cytoplasm. It carries out the reaction (S)-dihydroorotate + NAD(+) = orotate + NADH + H(+). It functions in the pathway pyrimidine metabolism; UMP biosynthesis via de novo pathway; orotate from (S)-dihydroorotate (NAD(+) route): step 1/1. In terms of biological role, catalyzes the conversion of dihydroorotate to orotate with NAD(+) as electron acceptor. The sequence is that of Dihydroorotate dehydrogenase B (NAD(+)), catalytic subunit (pyrD) from Geobacter metallireducens (strain ATCC 53774 / DSM 7210 / GS-15).